A 342-amino-acid chain; its full sequence is Holliday junction branch migration complex subunit RuvB (342 aa).

The tract at residues 1-184 (MEEDFNIRDH…FGINLHLEYY (184 aa)) is large ATPase domain (RuvB-L). ATP is bound by residues L23, R24, G65, K68, T69, T70, 131–133 (EDY), R174, Y184, and R221. T69 contacts Mg(2+). Positions 185–255 (DDDILSNIIS…IANYALEALN (71 aa)) are small ATPAse domain (RuvB-S). Residues 258 to 342 (KYGLDEIDNK…YNSQKTLFND (85 aa)) are head domain (RuvB-H). 2 residues coordinate DNA: R313 and R318.

It belongs to the RuvB family. As to quaternary structure, homohexamer. Forms an RuvA(8)-RuvB(12)-Holliday junction (HJ) complex. HJ DNA is sandwiched between 2 RuvA tetramers; dsDNA enters through RuvA and exits via RuvB. An RuvB hexamer assembles on each DNA strand where it exits the tetramer. Each RuvB hexamer is contacted by two RuvA subunits (via domain III) on 2 adjacent RuvB subunits; this complex drives branch migration. In the full resolvosome a probable DNA-RuvA(4)-RuvB(12)-RuvC(2) complex forms which resolves the HJ.

It is found in the cytoplasm. It catalyses the reaction ATP + H2O = ADP + phosphate + H(+). The RuvA-RuvB-RuvC complex processes Holliday junction (HJ) DNA during genetic recombination and DNA repair, while the RuvA-RuvB complex plays an important role in the rescue of blocked DNA replication forks via replication fork reversal (RFR). RuvA specifically binds to HJ cruciform DNA, conferring on it an open structure. The RuvB hexamer acts as an ATP-dependent pump, pulling dsDNA into and through the RuvAB complex. RuvB forms 2 homohexamers on either side of HJ DNA bound by 1 or 2 RuvA tetramers; 4 subunits per hexamer contact DNA at a time. Coordinated motions by a converter formed by DNA-disengaged RuvB subunits stimulates ATP hydrolysis and nucleotide exchange. Immobilization of the converter enables RuvB to convert the ATP-contained energy into a lever motion, pulling 2 nucleotides of DNA out of the RuvA tetramer per ATP hydrolyzed, thus driving DNA branch migration. The RuvB motors rotate together with the DNA substrate, which together with the progressing nucleotide cycle form the mechanistic basis for DNA recombination by continuous HJ branch migration. Branch migration allows RuvC to scan DNA until it finds its consensus sequence, where it cleaves and resolves cruciform DNA. This is Holliday junction branch migration complex subunit RuvB from Bacteroides fragilis (strain ATCC 25285 / DSM 2151 / CCUG 4856 / JCM 11019 / LMG 10263 / NCTC 9343 / Onslow / VPI 2553 / EN-2).